Reading from the N-terminus, the 253-residue chain is Imidazole glycerol phosphate synthase subunit HisF (253 aa).

Residues aspartate 11 and aspartate 130 contribute to the active site.

Belongs to the HisA/HisF family. In terms of assembly, heterodimer of HisH and HisF.

Its subcellular location is the cytoplasm. It catalyses the reaction 5-[(5-phospho-1-deoxy-D-ribulos-1-ylimino)methylamino]-1-(5-phospho-beta-D-ribosyl)imidazole-4-carboxamide + L-glutamine = D-erythro-1-(imidazol-4-yl)glycerol 3-phosphate + 5-amino-1-(5-phospho-beta-D-ribosyl)imidazole-4-carboxamide + L-glutamate + H(+). The protein operates within amino-acid biosynthesis; L-histidine biosynthesis; L-histidine from 5-phospho-alpha-D-ribose 1-diphosphate: step 5/9. Its function is as follows. IGPS catalyzes the conversion of PRFAR and glutamine to IGP, AICAR and glutamate. The HisF subunit catalyzes the cyclization activity that produces IGP and AICAR from PRFAR using the ammonia provided by the HisH subunit. The protein is Imidazole glycerol phosphate synthase subunit HisF of Clostridium botulinum (strain Okra / Type B1).